A 262-amino-acid chain; its full sequence is Dihydroorotate dehydrogenase B (NAD(+)), electron transfer subunit (262 aa).

The FAD-binding FR-type domain maps to 3–104 (QLQEMMTVVS…MGPLGNGFPV (102 aa)). Residues 53-56 (RPIS), 70-72 (LYR), and 79-80 (GT) contribute to the FAD site. The [2Fe-2S] cluster site is built by Cys-226, Cys-231, Cys-234, and Cys-249.

The protein belongs to the PyrK family. As to quaternary structure, heterotetramer of 2 PyrK and 2 PyrD type B subunits. The cofactor is [2Fe-2S] cluster. Requires FAD as cofactor.

The protein operates within pyrimidine metabolism; UMP biosynthesis via de novo pathway; orotate from (S)-dihydroorotate (NAD(+) route): step 1/1. Its function is as follows. Responsible for channeling the electrons from the oxidation of dihydroorotate from the FMN redox center in the PyrD type B subunit to the ultimate electron acceptor NAD(+). In Lactococcus lactis subsp. cremoris (strain SK11), this protein is Dihydroorotate dehydrogenase B (NAD(+)), electron transfer subunit.